We begin with the raw amino-acid sequence, 144 residues long: Large ribosomal subunit protein uL15 (144 aa).

Residues 1–52 (MRLNTLSPAEGAKHAPKRVGRGIGSGLGKTAGRGHKGQNSRSGGGVRRGFEG) form a disordered region. Gly residues predominate over residues 21 to 31 (RGIGSGLGKTA).

The protein belongs to the universal ribosomal protein uL15 family. As to quaternary structure, part of the 50S ribosomal subunit.

Binds to the 23S rRNA. This is Large ribosomal subunit protein uL15 from Yersinia enterocolitica serotype O:8 / biotype 1B (strain NCTC 13174 / 8081).